Consider the following 62-residue polypeptide: Photosystem II reaction center protein Z (62 aa).

Helical transmembrane passes span 8–28 and 41–61; these read AVFA…VVFA and FSGT…NSLI.

Belongs to the PsbZ family. As to quaternary structure, PSII is composed of 1 copy each of membrane proteins PsbA, PsbB, PsbC, PsbD, PsbE, PsbF, PsbH, PsbI, PsbJ, PsbK, PsbL, PsbM, PsbT, PsbY, PsbZ, Psb30/Ycf12, at least 3 peripheral proteins of the oxygen-evolving complex and a large number of cofactors. It forms dimeric complexes.

Its subcellular location is the plastid. It localises to the chloroplast thylakoid membrane. Its function is as follows. May control the interaction of photosystem II (PSII) cores with the light-harvesting antenna, regulates electron flow through the 2 photosystem reaction centers. PSII is a light-driven water plastoquinone oxidoreductase, using light energy to abstract electrons from H(2)O, generating a proton gradient subsequently used for ATP formation. The protein is Photosystem II reaction center protein Z of Coffea arabica (Arabian coffee).